The chain runs to 206 residues: Large ribosomal subunit protein uL4 (206 aa).

A disordered region spans residues 48–97 (THAVKNRSLVSGGGKKPWKQKHTGRARQGSTRASQWVGGGKAMGPKPRDY). Basic residues predominate over residues 63–72 (KPWKQKHTGR).

It belongs to the universal ribosomal protein uL4 family. Part of the 50S ribosomal subunit.

Its function is as follows. One of the primary rRNA binding proteins, this protein initially binds near the 5'-end of the 23S rRNA. It is important during the early stages of 50S assembly. It makes multiple contacts with different domains of the 23S rRNA in the assembled 50S subunit and ribosome. Forms part of the polypeptide exit tunnel. This is Large ribosomal subunit protein uL4 from Anaeromyxobacter dehalogenans (strain 2CP-C).